The primary structure comprises 111 residues: Large ribosomal subunit protein uL24 (111 aa).

It belongs to the universal ribosomal protein uL24 family. In terms of assembly, part of the 50S ribosomal subunit.

One of two assembly initiator proteins, it binds directly to the 5'-end of the 23S rRNA, where it nucleates assembly of the 50S subunit. Functionally, one of the proteins that surrounds the polypeptide exit tunnel on the outside of the subunit. In Chlamydia trachomatis serovar A (strain ATCC VR-571B / DSM 19440 / HAR-13), this protein is Large ribosomal subunit protein uL24.